A 245-amino-acid chain; its full sequence is 1-(5-phosphoribosyl)-5-[(5-phosphoribosylamino)methylideneamino] imidazole-4-carboxamide isomerase (245 aa).

Residue aspartate 7 is the Proton acceptor of the active site. The active-site Proton donor is aspartate 129.

This sequence belongs to the HisA/HisF family.

Its subcellular location is the cytoplasm. The enzyme catalyses 1-(5-phospho-beta-D-ribosyl)-5-[(5-phospho-beta-D-ribosylamino)methylideneamino]imidazole-4-carboxamide = 5-[(5-phospho-1-deoxy-D-ribulos-1-ylimino)methylamino]-1-(5-phospho-beta-D-ribosyl)imidazole-4-carboxamide. The protein operates within amino-acid biosynthesis; L-histidine biosynthesis; L-histidine from 5-phospho-alpha-D-ribose 1-diphosphate: step 4/9. This Erwinia tasmaniensis (strain DSM 17950 / CFBP 7177 / CIP 109463 / NCPPB 4357 / Et1/99) protein is 1-(5-phosphoribosyl)-5-[(5-phosphoribosylamino)methylideneamino] imidazole-4-carboxamide isomerase.